A 332-amino-acid chain; its full sequence is Glycerol-3-phosphate dehydrogenase [NAD(P)+] (332 aa).

Residues tryptophan 11, arginine 30, and lysine 108 each coordinate NADPH. 3 residues coordinate sn-glycerol 3-phosphate: lysine 108, glycine 137, and serine 139. Alanine 141 lines the NADPH pocket. Sn-glycerol 3-phosphate contacts are provided by lysine 192, aspartate 245, serine 255, arginine 256, and asparagine 257. Lysine 192 acts as the Proton acceptor in catalysis. Arginine 256 contacts NADPH. 2 residues coordinate NADPH: valine 280 and glutamate 282.

The protein belongs to the NAD-dependent glycerol-3-phosphate dehydrogenase family.

Its subcellular location is the cytoplasm. It carries out the reaction sn-glycerol 3-phosphate + NAD(+) = dihydroxyacetone phosphate + NADH + H(+). The catalysed reaction is sn-glycerol 3-phosphate + NADP(+) = dihydroxyacetone phosphate + NADPH + H(+). Its pathway is membrane lipid metabolism; glycerophospholipid metabolism. Its function is as follows. Catalyzes the reduction of the glycolytic intermediate dihydroxyacetone phosphate (DHAP) to sn-glycerol 3-phosphate (G3P), the key precursor for phospholipid synthesis. This is Glycerol-3-phosphate dehydrogenase [NAD(P)+] from Burkholderia multivorans (strain ATCC 17616 / 249).